The primary structure comprises 357 residues: Guanine nucleotide-binding protein alpha-16 subunit (357 aa).

Residue Gly-2 is the site of N-myristoyl glycine attachment. Cys-3 is lipidated: S-palmitoyl cysteine. Residues 32 to 357 (RTIKLLLLGA…RDNLRTCGLY (326 aa)) form the G-alpha domain. Residues 35-48 (KLLLLGAGESGKST) are G1 motif. GTP-binding positions include 40 to 47 (GAGESGKS), 175 to 181 (LRTRIKT), 200 to 204 (DVGGQ), 269 to 272 (NKKD), and Ala-329. 2 residues coordinate Mg(2+): Ser-47 and Thr-181. Positions 173–181 (DILRTRIKT) are G2 motif. The G3 motif stretch occupies residues 196 to 205 (FLVFDVGGQR). The tract at residues 265–272 (ILFLNKKD) is G4 motif. The segment at 327-332 (TCATDT) is G5 motif.

It belongs to the G-alpha family. G proteins are composed of 3 units; alpha, beta and gamma. The alpha chain contains the guanine nucleotide binding site.

In terms of biological role, guanine nucleotide-binding proteins (G proteins) are involved as modulators or transducers in various transmembrane signaling systems. In the 1-cell embryo, probably together with goa-1, controls nuclear rotation and spindle elongation during mitosis. During the first embryonic cell divisons, plays a role in gpr-1/2 cortical localization and in the proper orientation of EMS blastomere mitotic spindle. This Caenorhabditis elegans protein is Guanine nucleotide-binding protein alpha-16 subunit (gpa-16).